The sequence spans 571 residues: MRWLSAASSAFAVVLWLSGPPFAIGPLVFIALVPLLAIAEVSPSSSWKRPLYAASLAYWLLSLQGLRYAHPLMFLPWIALSGYLAIYPVLFIALLRRLRLVDNCDVSQARRDRVPLCLVAAVVWVGLEWIRNYFFTGISVLMLGHALADMPMLIQIADLGGTYAVSFVIVCVNVAMFDALNRWVVQRTSSVSDSPMKSLVTAGGLLIATMVYGAMSMNAETEPTGKTIALLGDNELTVYEQDIVREQEIFATYGQMAIDAVAKSNTRIDAVVWPESMFSGGLPWMTTGADLVVPDFMQNPAAAPLQPEQLRFAVESKQNDFLDRANSIQRAMRASSTVPTEAPPAIIGGCGLVQYADRPSQYSGVVWVNATGNMSGTYSKNHLVLFGETIPLVHSLPWIRDIVPPGLGLDRGTQPERFDLDGISLMPNLCIETAVERIPVNHMHQLNSRANPKLPDAIVTLTNDVWFHDSAVVDHHLRCAQLVAVGCRRPILSAANGGPTVWIDSAGRVVERLAKGQSDVIYAQPRRDSRISLYVRIGSWPAGLMGAATLCGLAWMTFEWLMRRRKRSVIA.

6 consecutive transmembrane segments (helical) span residues 13–33 (VVLW…IALV), 51–68 (LYAA…GLRY), 72–92 (LMFL…VLFI), 118–138 (LVAA…FTGI), 152–172 (MLIQ…IVCV), and 199–219 (LVTA…SMNA). In terms of domain architecture, CN hydrolase spans 234 to 527 (NELTVYEQDI…SDVIYAQPRR (294 aa)). The active-site Proton acceptor is Glu-275. Residue Lys-380 is part of the active site. Catalysis depends on Cys-430, which acts as the Nucleophile. A helical membrane pass occupies residues 542-562 (AGLMGAATLCGLAWMTFEWLM).

It belongs to the CN hydrolase family. Apolipoprotein N-acyltransferase subfamily.

It localises to the cell inner membrane. The catalysed reaction is N-terminal S-1,2-diacyl-sn-glyceryl-L-cysteinyl-[lipoprotein] + a glycerophospholipid = N-acyl-S-1,2-diacyl-sn-glyceryl-L-cysteinyl-[lipoprotein] + a 2-acyl-sn-glycero-3-phospholipid + H(+). It participates in protein modification; lipoprotein biosynthesis (N-acyl transfer). Functionally, catalyzes the phospholipid dependent N-acylation of the N-terminal cysteine of apolipoprotein, the last step in lipoprotein maturation. This Rhodopirellula baltica (strain DSM 10527 / NCIMB 13988 / SH1) protein is Apolipoprotein N-acyltransferase.